Here is a 212-residue protein sequence, read N- to C-terminus: Cytidylate kinase (212 aa).

7–15 (GPAASGKGT) is a binding site for ATP.

It belongs to the cytidylate kinase family. Type 1 subfamily.

It is found in the cytoplasm. The enzyme catalyses CMP + ATP = CDP + ADP. It catalyses the reaction dCMP + ATP = dCDP + ADP. This chain is Cytidylate kinase, found in Bradyrhizobium diazoefficiens (strain JCM 10833 / BCRC 13528 / IAM 13628 / NBRC 14792 / USDA 110).